The chain runs to 241 residues: Putative inactive serine protease 58 (241 aa).

A signal peptide spans 1-17 (MKLAFLCILSTLLRTFA). Positions 18 to 239 (YNPDHIAGTT…YLPWIEDTMK (222 aa)) constitute a Peptidase S1 domain. Residues cysteine 41 and cysteine 57 are joined by a disulfide bond. Catalysis depends on charge relay system residues histidine 56 and aspartate 101. 3 cysteine pairs are disulfide-bonded: cysteine 133/cysteine 201, cysteine 165/cysteine 180, and cysteine 191/cysteine 215. Residue asparagine 156 is glycosylated (N-linked (GlcNAc...) asparagine).

It belongs to the peptidase S1 family.

The protein resides in the secreted. It catalyses the reaction Preferential cleavage: Arg-|-Xaa, Lys-|-Xaa.. The protein is Putative inactive serine protease 58 (Prss58) of Mus musculus (Mouse).